A 439-amino-acid polypeptide reads, in one-letter code: Actin-related protein 3 (439 aa).

Residues 40–71 (PSAGTGGSGSGRPAVANKPSFLTGGAGPGGHL) form a disordered region.

The protein belongs to the actin family. ARP3 subfamily. Component of the Arp2/3 complex composed.

It is found in the cytoplasm. The protein resides in the cytoskeleton. Functionally, functions as ATP-binding component of the Arp2/3 complex which is involved in regulation of actin polymerization and together with an activating nucleation-promoting factor (NPF) mediates the formation of branched actin networks. Seems to contact the pointed end of the daughter actin filament. The polypeptide is Actin-related protein 3 (arp-3) (Neurospora crassa (strain ATCC 24698 / 74-OR23-1A / CBS 708.71 / DSM 1257 / FGSC 987)).